Consider the following 409-residue polypeptide: Sex-determination protein fem-3 (409 aa).

Component of a complex containing fem-1, fem-2 and fem-3. Interacts with fem-1 and fem-2 (via N-terminus). Part of a E3 ubiquitin-protein ligase complex, at least composed of cul-2, elc-1, tra-1, fem-1, fem-2 and fem-3; mediates the ubiquitination and subsequent proteasomal degradation of tra-1. Interacts with sel-10. Interacts with tra-2.

Required for male development. In XO (male) animals, fem-3 directs male differentiation in all tissues. In XX (hermaphrodite animals), it specifies the first 80 or so germ cells to be sperm. Negatively regulates male development when bound to tra-2. The chain is Sex-determination protein fem-3 from Caenorhabditis briggsae.